We begin with the raw amino-acid sequence, 182 residues long: Protein GrpE (182 aa).

The protein belongs to the GrpE family. As to quaternary structure, homodimer.

Its subcellular location is the cytoplasm. Participates actively in the response to hyperosmotic and heat shock by preventing the aggregation of stress-denatured proteins, in association with DnaK and GrpE. It is the nucleotide exchange factor for DnaK and may function as a thermosensor. Unfolded proteins bind initially to DnaJ; upon interaction with the DnaJ-bound protein, DnaK hydrolyzes its bound ATP, resulting in the formation of a stable complex. GrpE releases ADP from DnaK; ATP binding to DnaK triggers the release of the substrate protein, thus completing the reaction cycle. Several rounds of ATP-dependent interactions between DnaJ, DnaK and GrpE are required for fully efficient folding. In Aquifex aeolicus (strain VF5), this protein is Protein GrpE.